The primary structure comprises 205 residues: Adenylyl-sulfate kinase (205 aa).

39-46 (GLSGAGKS) contacts ATP. Ser113 serves as the catalytic Phosphoserine intermediate.

This sequence belongs to the APS kinase family.

The catalysed reaction is adenosine 5'-phosphosulfate + ATP = 3'-phosphoadenylyl sulfate + ADP + H(+). It functions in the pathway sulfur metabolism; hydrogen sulfide biosynthesis; sulfite from sulfate: step 2/3. Functionally, catalyzes the synthesis of activated sulfate. This is Adenylyl-sulfate kinase from Vibrio parahaemolyticus serotype O3:K6 (strain RIMD 2210633).